Here is a 260-residue protein sequence, read N- to C-terminus: Oxidoreductase macE (260 aa).

It belongs to the oxidoreductase OpS7 family.

It participates in secondary metabolite biosynthesis; terpenoid biosynthesis. Functionally, oxidoreductase; part of the gene cluster that mediates the biosynthesis of macrophorins, isoprenoid epoxycyclohexenones containing cyclized drimane moieties. The first step of the pathway is the synthesis of 6-methylsalicylic acid (6-MSA) by the polyketide synthase macA. 6-MSA is then converted to m-cresol by the decarboxylase macB. The cytochrome P450 monooxygenase macC then catalyzes the oxidation of m-cresol to toluquinol. Epoxidation of toluquinol is then performed by the short chain dehydrogenase macD, with the help of macE, and a further prenylation by macG leads to 7-deacetoxyyanuthone A. The next step is the hydroxylation of C-22 of 7-deacetoxyyanuthone A by the cytochrome P450 monooxygenase macH to yield 22-deacetylyanuthone A. O-Mevalon transferase macI then attaches mevalon to the hydroxyl group of 22-deacetylyanuthone A to produce yanuthone E. The terpene cyclase macJ catalyzes the cyclization of 22-deacetylyanuthone A to macrophorin A. MacJ is also able to catalyze cyclization of yanuthone E and 7-deacetoxyyanuthone A to their corresponding macrophorins. The macJ products can be further modified by macH and macJ, as well as by the FAD-dependent monooxygenase macF, to produce additional macrophorins, including 4'-oxomacrophorin A, 4'-oxomacrophorin D and 4'-oxomacrophorin E. The polypeptide is Oxidoreductase macE (Penicillium terrestre).